The chain runs to 458 residues: Opine oxidase subunit A (458 aa).

This sequence to T-protein and to dimethylglycine dehydrogenase. In terms of assembly, heterodimer of a subunit A and a subunit B.

Its pathway is opine metabolism; octopine degradation. Oxidative cleavage of octopine into L-arginine and pyruvate. This chain is Opine oxidase subunit A (ooxA), found in Rhizobium meliloti (strain 1021) (Ensifer meliloti).